An 85-amino-acid polypeptide reads, in one-letter code: N.vectensis toxin 6 (85 aa).

An N-terminal signal peptide occupies residues 1–20 (MISFKTVIVCLFLWVVIIGA). Cystine bridges form between C46/C82, C48/C71, and C64/C83.

Its function is as follows. Probable toxin. The polypeptide is N.vectensis toxin 6 (Nematostella vectensis (Starlet sea anemone)).